We begin with the raw amino-acid sequence, 472 residues long: Cysteine--tRNA ligase (472 aa).

Cys27 contributes to the Zn(2+) binding site. Residues 29–39 (PTVYNLIHIGN) carry the 'HIGH' region motif. 3 residues coordinate Zn(2+): Cys214, His239, and Glu243. The short motif at 271-275 (KMSKS) is the 'KMSKS' region element. Lys274 provides a ligand contact to ATP.

The protein belongs to the class-I aminoacyl-tRNA synthetase family. As to quaternary structure, monomer. Requires Zn(2+) as cofactor.

It is found in the cytoplasm. It catalyses the reaction tRNA(Cys) + L-cysteine + ATP = L-cysteinyl-tRNA(Cys) + AMP + diphosphate. In Lachnospira eligens (strain ATCC 27750 / DSM 3376 / VPI C15-48 / C15-B4) (Eubacterium eligens), this protein is Cysteine--tRNA ligase.